The primary structure comprises 239 residues: Splicing factor U2AF 35 kDa subunit (239 aa).

The residue at position 2 (Ala2) is an N-acetylalanine. Residues 12 to 40 (EKDKVNCSFYFKIGACRHGDRCSRLHNKP) form a C3H1-type 1 zinc finger. Lys39 is modified (N6-methyllysine). Residues Ser61 and Ser145 each carry the phosphoserine modification. Residues 65–147 (LRCAVSDVEM…QPIHAELSPV (83 aa)) form the RRM domain. A C3H1-type 2 zinc finger spans residues 149-176 (DFREACCRQYEMGECTRGGFCNFMHLKP). Omega-N-methylarginine is present on Arg165. The disordered stretch occupies residues 183–239 (RELYGRRRKKHRSRSRSRERRSRSRDRGRGGGGGGGGGGGRERDRRRSRDRERSGRF). Residues 188 to 208 (RRRKKHRSRSRSRERRSRSRD) show a composition bias toward basic residues. Residues 212-221 (GGGGGGGGGG) show a composition bias toward gly residues. The segment covering 222-239 (GRERDRRRSRDRERSGRF) has biased composition (basic and acidic residues).

It belongs to the splicing factor SR family. Identified in the spliceosome C complex. Heterodimer with U2AF2. Interacts (via RS domain) with PHF5A (via N-terminus). Interacts with ZRANB2. Interacts with SDE2. Interacts with SF3B1. As to expression, expressed in primary spermatocytes and elongating spermatids (at protein level).

The protein localises to the nucleus. Its subcellular location is the nucleus speckle. Its function is as follows. Plays a critical role in both constitutive and enhancer-dependent splicing by mediating protein-protein interactions and protein-RNA interactions required for accurate 3'-splice site selection. Recruits U2 snRNP to the branch point. Directly mediates interactions between U2AF2 and proteins bound to the enhancers and thus may function as a bridge between U2AF2 and the enhancer complex to recruit it to the adjacent intron. The chain is Splicing factor U2AF 35 kDa subunit (U2af1) from Mus musculus (Mouse).